The chain runs to 667 residues: 1-deoxy-D-xylulose-5-phosphate synthase (667 aa).

Thiamine diphosphate is bound by residues His-73 and 113-115; that span reads SHA. Asp-145 provides a ligand contact to Mg(2+). Residues 146 to 147, Asn-175, Tyr-297, and Glu-379 contribute to the thiamine diphosphate site; that span reads GA. Mg(2+) is bound at residue Asn-175.

The protein belongs to the transketolase family. DXPS subfamily. Homodimer. Mg(2+) serves as cofactor. Thiamine diphosphate is required as a cofactor.

It catalyses the reaction D-glyceraldehyde 3-phosphate + pyruvate + H(+) = 1-deoxy-D-xylulose 5-phosphate + CO2. It participates in metabolic intermediate biosynthesis; 1-deoxy-D-xylulose 5-phosphate biosynthesis; 1-deoxy-D-xylulose 5-phosphate from D-glyceraldehyde 3-phosphate and pyruvate: step 1/1. Catalyzes the acyloin condensation reaction between C atoms 2 and 3 of pyruvate and glyceraldehyde 3-phosphate to yield 1-deoxy-D-xylulose-5-phosphate (DXP). The sequence is that of 1-deoxy-D-xylulose-5-phosphate synthase from Kocuria rhizophila (strain ATCC 9341 / DSM 348 / NBRC 103217 / DC2201).